A 400-amino-acid chain; its full sequence is Telomere repeat-binding protein 6 (400 aa).

A Ubiquitin-like domain is found at 173 to 252; it reads VKFGIKSLNI…DDENLGSLGF (80 aa). The HTH myb-type domain occupies 310-369; sequence VQRRIRRPFTVSEVEALVQAVERLGTGRWRDVKSHAFNHVNHRTYVDLKDKWKTLVHTAK. The segment at residues 338–365 is a DNA-binding region (H-T-H motif); that stretch reads WRDVKSHAFNHVNHRTYVDLKDKWKTLV.

In terms of assembly, homodimer. Expressed ubiquitously.

It is found in the nucleus. In terms of biological role, binds specifically to the plant telomeric double-stranded DNA sequences. At least 4 repeats of telomeric sequences are required for binding. This is Telomere repeat-binding protein 6 (TRP6) from Arabidopsis thaliana (Mouse-ear cress).